Reading from the N-terminus, the 309-residue chain is Metal ABC transporter substrate-binding lipoprotein SsaB (309 aa).

The signal sequence occupies residues 1-19 (MKKLGFLSLLLLAVCTLFA). The N-palmitoyl cysteine moiety is linked to residue C20. C20 carries S-diacylglycerol cysteine lipidation. Residues H67, H139, E205, and D280 each contribute to the a divalent metal cation site.

The protein belongs to the bacterial solute-binding protein 9 family. Lipoprotein receptor antigen (Lrai) subfamily. In terms of assembly, homodimer and homotrimer.

The protein localises to the cell membrane. In terms of biological role, part of an ATP-binding cassette (ABC) transport system involved in metal import. Binds a metal with high affinity and specificity and delivers it to the membrane permease for translocation into the cytoplasm. Also acts as an adhesin which is involved on adherence to extracellular matrix. It is an important factor in the pathogenesis and infection. May contribute to the formation and accumulation of dental plaque. The polypeptide is Metal ABC transporter substrate-binding lipoprotein SsaB (ssaB) (Streptococcus sanguinis).